A 2395-amino-acid polypeptide reads, in one-letter code: Helicase ssl-1 (2395 aa).

Over residues 1–12 the composition is skewed to low complexity; sequence MPATPVRASSTR. Residues 1–62 form a disordered region; it reads MPATPVRASS…EKKKKKTSDD (62 aa). Residues 227-300 form the HSA domain; it reads LPKCVEPERN…IKEKRKMCAG (74 aa). Positions 354–363 are enriched in polar residues; it reads LVSSSKSPSI. 2 disordered regions span residues 354 to 404 and 444 to 504; these read LVSS…VRQE and EKLE…HGVL. Composition is skewed to basic and acidic residues over residues 365–375, 394–404, and 444–462; these read SDRDDKDEEFK, KSQKKEDVRQE, and EKLE…NEEK. Positions 388–464 form a coiled coil; that stretch reads TIANAEKSQK…ACGDNEEKME (77 aa). The segment covering 470–490 has biased composition (polar residues); sequence SSDAQKPSTSSSDLTAEQLQD. Residues 570 to 735 form the Helicase ATP-binding domain; the sequence is VTLYEKNLNG…WSLMHFLMPT (166 aa). Residue 583-590 coordinates ATP; sequence DEMGLGKT. The tract at residues 963–982 is disordered; sequence AQPLQNGNSIPQNAPNRPQT. One can recognise a Helicase C-terminal domain in the interval 1196–1342; the sequence is LLRQLYLYKH…ELAIDEAGFT (147 aa). Positions 1452–1476 form a coiled coil; it reads KPEFEEECKEAEALIDQKREEWDKN. 5 disordered regions span residues 1615–1706, 1977–2073, 2092–2143, 2276–2306, and 2350–2395; these read ESAA…EEPD, SIQH…RRNA, QSGK…PQQR, QMRS…RPLV, and MQMP…PPQN. Low complexity-rich tracts occupy residues 1647-1669 and 1981-1995; these read QQPT…QQQQ and LQSS…QNLQ. Residues 1996-2019 are compositionally biased toward polar residues; that stretch reads NSHNSEQRNNVQNMHQNQYNSSQN. Composition is skewed to low complexity over residues 2051 to 2073 and 2092 to 2114; these read LVQQ…RRNA and QSGK…SSND. Positions 2115-2129 are enriched in gly residues; that stretch reads GQGGASTVGGGGGGS. The segment covering 2130–2142 has biased composition (low complexity); it reads QQPHQQQQQQPQQ. Over residues 2281–2299 the composition is skewed to gly residues; it reads NGGGVGGQGGLQGGPGGPQ. Residues 2361-2377 are compositionally biased toward low complexity; the sequence is QQQAPPQSSQQASQQAP.

It belongs to the SNF2/RAD54 helicase family. SWR1 subfamily.

The protein resides in the nucleus. In terms of biological role, probable catalytic component of a chromatin-remodeling complex which mediates the ATP-dependent exchange of histone H2A variant H2AV/htz-1 for H2A, leading to transcriptional regulation of selected genes by chromatin remodeling. Involved in foregut development, and may be involved in vulval development. This chain is Helicase ssl-1 (ssl-1), found in Caenorhabditis elegans.